The chain runs to 609 residues: Elongation factor 4 (609 aa).

Positions 11–193 constitute a tr-type G domain; sequence ERIRNFSIIA…QIVEKIPAPS (183 aa). GTP-binding positions include 23-28 and 140-143; these read DHGKST and NKID.

Belongs to the TRAFAC class translation factor GTPase superfamily. Classic translation factor GTPase family. LepA subfamily.

The protein localises to the cell membrane. The enzyme catalyses GTP + H2O = GDP + phosphate + H(+). In terms of biological role, required for accurate and efficient protein synthesis under certain stress conditions. May act as a fidelity factor of the translation reaction, by catalyzing a one-codon backward translocation of tRNAs on improperly translocated ribosomes. Back-translocation proceeds from a post-translocation (POST) complex to a pre-translocation (PRE) complex, thus giving elongation factor G a second chance to translocate the tRNAs correctly. Binds to ribosomes in a GTP-dependent manner. This is Elongation factor 4 from Geobacillus thermodenitrificans (strain NG80-2).